A 369-amino-acid polypeptide reads, in one-letter code: Beta-1,4-galactosyltransferase 2 (369 aa).

The Cytoplasmic segment spans residues 1–15 (MSRLLGGTLERVCKA). Residues 16–36 (VLLLCLLHFLVAVILYFDVYA) traverse the membrane as a helical; Signal-anchor for type II membrane protein segment. Residues 37–369 (QHLAFFSRFS…GQPMSWLTQG (333 aa)) are Lumenal-facing. A compositionally biased stretch (polar residues) spans 58–73 (ASSSTNCSRPNATAAS). Positions 58–90 (ASSSTNCSRPNATAASSGLPEVPSARPGPTAPV) are disordered. 2 N-linked (GlcNAc...) asparagine glycosylation sites follow: asparagine 63 and asparagine 68. A disulfide bond links cysteine 94 and cysteine 136. UDP-alpha-D-galactose contacts are provided by residues 147–151 (PFRHR), 186–188 (FNR), 214–215 (VD), and tryptophan 275. Cysteine 208 and cysteine 227 form a disulfide bridge. Aspartate 215 lines the Mn(2+) pocket. 277 to 280 (GEDD) is an N-acetyl-D-glucosamine binding site. Position 308 (histidine 308) interacts with Mn(2+). 308–310 (HDR) contributes to the UDP-alpha-D-galactose binding site. Arginine 320 contributes to the N-acetyl-D-glucosamine binding site. Residue asparagine 354 is glycosylated (N-linked (GlcNAc...) asparagine).

The protein belongs to the glycosyltransferase 7 family. Requires Mn(2+) as cofactor.

The protein localises to the golgi apparatus. It is found in the golgi stack membrane. It carries out the reaction D-glucose + UDP-alpha-D-galactose = lactose + UDP + H(+). The catalysed reaction is an N-acetyl-beta-D-glucosaminyl derivative + UDP-alpha-D-galactose = a beta-D-galactosyl-(1-&gt;4)-N-acetyl-beta-D-glucosaminyl derivative + UDP + H(+). The enzyme catalyses N-acetyl-D-glucosamine + UDP-alpha-D-galactose = beta-D-galactosyl-(1-&gt;4)-N-acetyl-D-glucosamine + UDP + H(+). It functions in the pathway protein modification; protein glycosylation. In terms of biological role, responsible for the synthesis of complex-type N-linked oligosaccharides in many glycoproteins as well as the carbohydrate moieties of glycolipids. Can produce lactose. This chain is Beta-1,4-galactosyltransferase 2, found in Mus musculus (Mouse).